Here is a 106-residue protein sequence, read N- to C-terminus: Iron-sulfur cluster assembly protein CyaY (106 aa).

It belongs to the frataxin family.

In terms of biological role, involved in iron-sulfur (Fe-S) cluster assembly. May act as a regulator of Fe-S biogenesis. The protein is Iron-sulfur cluster assembly protein CyaY of Escherichia coli O127:H6 (strain E2348/69 / EPEC).